The chain runs to 59 residues: Large ribosomal subunit protein uL30 (59 aa).

This sequence belongs to the universal ribosomal protein uL30 family. Part of the 50S ribosomal subunit.

This Brachyspira hyodysenteriae (strain ATCC 49526 / WA1) protein is Large ribosomal subunit protein uL30.